Consider the following 184-residue polypeptide: MEEYKALLDEKMSKVLLSLESEYKSLRTGRINSSLFDKVLVDYYGEKTPLTRVANVSIPEARLIVIQPWDKSLLSKIEQAILSSDLSMNPSSDGAVLRIKVPVLTVERRKEIVKQAKKIAEEYKVAARNVRQELNSKAKKQEKDSQITEDDLRRILDDIQRDTNSYIKKIDEIFDLKTKEIMEV.

This sequence belongs to the RRF family.

It localises to the cytoplasm. Functionally, responsible for the release of ribosomes from messenger RNA at the termination of protein biosynthesis. May increase the efficiency of translation by recycling ribosomes from one round of translation to another. This chain is Ribosome-recycling factor, found in Borrelia turicatae (strain 91E135).